The chain runs to 316 residues: Cytochrome c biogenesis protein CcsA (316 aa).

Helical transmembrane passes span 9–29, 39–61, 70–90, 94–114, 143–163, 224–244, 257–271, and 289–309; these read IFVN…LINL, FSKN…RYLQ, LYES…ILEV, IGLS…FATL, LISY…LSLF, TISL…VWAN, ETWA…AIYL, and SMGF…GVGL.

It belongs to the CcmF/CycK/Ccl1/NrfE/CcsA family. In terms of assembly, may interact with Ccs1.

Its subcellular location is the plastid. The protein resides in the chloroplast thylakoid membrane. Functionally, required during biogenesis of c-type cytochromes (cytochrome c6 and cytochrome f) at the step of heme attachment. The chain is Cytochrome c biogenesis protein CcsA from Adiantum capillus-veneris (Maidenhair fern).